Consider the following 227-residue polypeptide: UPF0758 protein LPC_1989 (227 aa).

Positions 102–225 (QLSNTQQTYA…YSIFAENKWV (124 aa)) constitute an MPN domain. Zn(2+)-binding residues include His-173, His-175, and Asp-186. The JAMM motif signature appears at 173 to 186 (HNHPSGLSDASQQD).

This sequence belongs to the UPF0758 family.

The polypeptide is UPF0758 protein LPC_1989 (Legionella pneumophila (strain Corby)).